The sequence spans 321 residues: Phosphatidate cytidylyltransferase, mitochondrial (321 aa).

It belongs to the TAM41 family. It depends on Mg(2+) as a cofactor. Requires Co(2+) as cofactor. Cu(2+) is required as a cofactor.

Its subcellular location is the mitochondrion inner membrane. The catalysed reaction is a 1,2-diacyl-sn-glycero-3-phosphate + CTP + H(+) = a CDP-1,2-diacyl-sn-glycerol + diphosphate. Its pathway is phospholipid metabolism; CDP-diacylglycerol biosynthesis; CDP-diacylglycerol from sn-glycerol 3-phosphate: step 3/3. Functionally, catalyzes the formation of CDP-diacylglycerol (CDP-DAG) from phosphatidic acid (PA) in the mitochondrial inner membrane. Required for the biosynthesis of the dimeric phospholipid cardiolipin, which stabilizes supercomplexes of the mitochondrial respiratory chain in the mitochondrial inner membrane. The protein is Phosphatidate cytidylyltransferase, mitochondrial of Caenorhabditis elegans.